Here is a 378-residue protein sequence, read N- to C-terminus: Erythronate-4-phosphate dehydrogenase (378 aa).

The substrate site is built by S45 and T67. D147 is an NAD(+) binding site. R209 is a catalytic residue. D233 is a binding site for NAD(+). The active site involves E238. H255 (proton donor) is an active-site residue. An NAD(+)-binding site is contributed by G258. Position 259 (Y259) interacts with substrate.

It belongs to the D-isomer specific 2-hydroxyacid dehydrogenase family. PdxB subfamily. As to quaternary structure, homodimer.

The protein resides in the cytoplasm. It carries out the reaction 4-phospho-D-erythronate + NAD(+) = (R)-3-hydroxy-2-oxo-4-phosphooxybutanoate + NADH + H(+). It participates in cofactor biosynthesis; pyridoxine 5'-phosphate biosynthesis; pyridoxine 5'-phosphate from D-erythrose 4-phosphate: step 2/5. Its function is as follows. Catalyzes the oxidation of erythronate-4-phosphate to 3-hydroxy-2-oxo-4-phosphonooxybutanoate. The chain is Erythronate-4-phosphate dehydrogenase from Shewanella denitrificans (strain OS217 / ATCC BAA-1090 / DSM 15013).